The primary structure comprises 102 residues: Small ribosomal subunit protein uS10 (102 aa).

The protein belongs to the universal ribosomal protein uS10 family. In terms of assembly, part of the 30S ribosomal subunit.

Functionally, involved in the binding of tRNA to the ribosomes. This Clostridium botulinum (strain ATCC 19397 / Type A) protein is Small ribosomal subunit protein uS10.